The primary structure comprises 172 residues: Putative phosphoesterase BAMEG_3349 (172 aa).

The Proton donor role is filled by His34. 2 short sequence motifs (HXTX) span residues 34-37 (HITL) and 115-118 (HLTI). The active-site Proton acceptor is the His115.

The protein belongs to the 2H phosphoesterase superfamily. YjcG family.

This Bacillus anthracis (strain CDC 684 / NRRL 3495) protein is Putative phosphoesterase BAMEG_3349.